Reading from the N-terminus, the 243-residue chain is Cell division protein ZipA (243 aa).

At 1 to 4 (MSDM) the chain is on the periplasmic side. Residues 5 to 25 (AMIRIGILIAGLLLVAAIFLF) traverse the membrane as a helical segment. The Cytoplasmic segment spans residues 26–243 (GRPKKSPQGR…APPLTKSPRW (218 aa)). Positions 30–89 (KSPQGRRVDKDEGQPRERREPVISSEFGVEDDAAERAEGVEQSELNLEGQDASGGNEVGK) are disordered. Basic and acidic residues predominate over residues 35–50 (RRVDKDEGQPRERREP).

This sequence belongs to the ZipA family. In terms of assembly, interacts with FtsZ via their C-terminal domains.

The protein resides in the cell inner membrane. Its function is as follows. Essential cell division protein that stabilizes the FtsZ protofilaments by cross-linking them and that serves as a cytoplasmic membrane anchor for the Z ring. Also required for the recruitment to the septal ring of downstream cell division proteins. The chain is Cell division protein ZipA from Xanthomonas euvesicatoria pv. vesicatoria (strain 85-10) (Xanthomonas campestris pv. vesicatoria).